The primary structure comprises 546 residues: Chaperonin GroEL (546 aa).

Residues 30–33, lysine 51, 87–91, glycine 415, and aspartate 496 each bind ATP; these read TLGP and DGTTT. Residues 526 to 546 form a disordered region; sequence PEDKPAPAMPGGMGGMGGMDF. The segment covering 536 to 546 has biased composition (gly residues); it reads GGMGGMGGMDF.

Belongs to the chaperonin (HSP60) family. Forms a cylinder of 14 subunits composed of two heptameric rings stacked back-to-back. Interacts with the co-chaperonin GroES.

It localises to the cytoplasm. The enzyme catalyses ATP + H2O + a folded polypeptide = ADP + phosphate + an unfolded polypeptide.. Together with its co-chaperonin GroES, plays an essential role in assisting protein folding. The GroEL-GroES system forms a nano-cage that allows encapsulation of the non-native substrate proteins and provides a physical environment optimized to promote and accelerate protein folding. This Zymomonas mobilis subsp. mobilis (strain ATCC 31821 / ZM4 / CP4) protein is Chaperonin GroEL.